Here is a 287-residue protein sequence, read N- to C-terminus: Probable glucose uptake protein GlcU (287 aa).

9 consecutive transmembrane segments (helical) span residues 7–29 (LIAL…VGGG), 34–56 (IRGT…FAKF), 58–75 (NPTV…WAFG), 114–136 (WSSM…GVAL), 156–178 (MGIL…IFGV), 183–202 (ALFF…SMNH), 209–228 (TALN…FMFY), 233–255 (VGVA…GGIF), and 267–286 (TGIW…LGNL).

Belongs to the GRP transporter (TC 2.A.7.5) family.

Its subcellular location is the cell membrane. Involved in the uptake of glucose. This is Probable glucose uptake protein GlcU (glcU) from Staphylococcus aureus (strain COL).